A 195-amino-acid polypeptide reads, in one-letter code: Probable chorismate pyruvate-lyase (195 aa).

Residues Arg-79, Leu-117, and Glu-180 each coordinate substrate.

The protein belongs to the UbiC family.

It localises to the cytoplasm. It catalyses the reaction chorismate = 4-hydroxybenzoate + pyruvate. The protein operates within cofactor biosynthesis; ubiquinone biosynthesis. Removes the pyruvyl group from chorismate, with concomitant aromatization of the ring, to provide 4-hydroxybenzoate (4HB) for the ubiquinone pathway. The chain is Probable chorismate pyruvate-lyase from Ralstonia nicotianae (strain ATCC BAA-1114 / GMI1000) (Ralstonia solanacearum).